The chain runs to 1202 residues: Ribonuclease P protein component, mitochondrial (1202 aa).

The N-terminal 122 residues, 1–122, are a transit peptide targeting the mitochondrion; that stretch reads MAFKSFIYSK…NNNNNQHRYY (122 aa). Residues 109–134 are disordered; that stretch reads NYVNNNNNNQHRYYSTGPTLPTNQYD. Residues 118-134 are compositionally biased toward polar residues; it reads QHRYYSTGPTLPTNQYD.

Consists of an RNA moiety (RPM1) and the protein component (RPM2). Both are necessary for full enzymatic activity.

It is found in the mitochondrion. The enzyme catalyses Endonucleolytic cleavage of RNA, removing 5'-extranucleotides from tRNA precursor.. Functionally, ribonuclease P generates mature tRNA molecules by cleaving their 5'-ends. In Saccharomyces cerevisiae (strain ATCC 204508 / S288c) (Baker's yeast), this protein is Ribonuclease P protein component, mitochondrial (RPM2).